A 106-amino-acid polypeptide reads, in one-letter code: Integration host factor subunit alpha (106 aa).

Belongs to the bacterial histone-like protein family. Heterodimer of an alpha and a beta chain.

Functionally, this protein is one of the two subunits of integration host factor, a specific DNA-binding protein that functions in genetic recombination as well as in transcriptional and translational control. This is Integration host factor subunit alpha from Methylobacterium radiotolerans (strain ATCC 27329 / DSM 1819 / JCM 2831 / NBRC 15690 / NCIMB 10815 / 0-1).